A 111-amino-acid chain; its full sequence is Large ribosomal subunit protein uL22 (111 aa).

It belongs to the universal ribosomal protein uL22 family. As to quaternary structure, part of the 50S ribosomal subunit.

In terms of biological role, this protein binds specifically to 23S rRNA; its binding is stimulated by other ribosomal proteins, e.g. L4, L17, and L20. It is important during the early stages of 50S assembly. It makes multiple contacts with different domains of the 23S rRNA in the assembled 50S subunit and ribosome. Its function is as follows. The globular domain of the protein is located near the polypeptide exit tunnel on the outside of the subunit, while an extended beta-hairpin is found that lines the wall of the exit tunnel in the center of the 70S ribosome. This Protochlamydia amoebophila (strain UWE25) protein is Large ribosomal subunit protein uL22.